A 503-amino-acid polypeptide reads, in one-letter code: MNISVTATPVKKIKTELLVVPFTTGALKKNADGILQDLGYDAVVLRDFKADAGELVILYGAAGKAIAARAALLGMGEGKKVTDFRKAAAALALKAMDMKIESVAVDFSGVKGFASSAKSSVASICSAFIEGCYTGSYRFDRLKSDKLKKKKDESDKTKEISELVLRAEPAQLSAVEDGLAAGIITGSCQNMARDLVNLPGNLLQAEDISAAAVESGKRCGFEVNVFGKEEIEALGMGGLLAVNRGSQHPPTFTVLDYKPEGKVAKTVALVGKGVTFDSGGISLKPSEGMGEMKSDMSGAASVIGAVEAVARLGLPIRVIGLIPATDNMPSGSATKPGDVITTYSGITVEVGNTDAEGRLILADALTYAKKQYNPDVIIDLATLTGACIVALGYTVAGLFSNDDRLADDIFEAGQITGEKVWRMPLWEEYDEMIKSDVADVSNLGARGAGSVTASRFLEKFIDGHKKWAHIDIAGPSFSAKGAKVSGATGFGVRLLVELLKKWS.

Mn(2+) is bound by residues K272 and D277. K284 is an active-site residue. Mn(2+) contacts are provided by D295, D354, and E356. R358 is an active-site residue.

This sequence belongs to the peptidase M17 family. Requires Mn(2+) as cofactor.

The protein resides in the cytoplasm. The enzyme catalyses Release of an N-terminal amino acid, Xaa-|-Yaa-, in which Xaa is preferably Leu, but may be other amino acids including Pro although not Arg or Lys, and Yaa may be Pro. Amino acid amides and methyl esters are also readily hydrolyzed, but rates on arylamides are exceedingly low.. It catalyses the reaction Release of an N-terminal amino acid, preferentially leucine, but not glutamic or aspartic acids.. Presumably involved in the processing and regular turnover of intracellular proteins. Catalyzes the removal of unsubstituted N-terminal amino acids from various peptides. The sequence is that of Probable cytosol aminopeptidase from Chlorobium limicola (strain DSM 245 / NBRC 103803 / 6330).